A 171-amino-acid polypeptide reads, in one-letter code: O-acetyl-ADP-ribose deacetylase 2 (171 aa).

In terms of domain architecture, Macro spans 1–171; sequence MNKITVIQGD…NYDLYLKLLN (171 aa). Substrate contacts are provided by residues 10-11, Asn24, 32-34, and 121-125; these read DI, GVD, and STGIY. Asp34 functions as the Proton acceptor in the catalytic mechanism.

This sequence belongs to the MacroD-type family. YmdB subfamily. In terms of assembly, homodimer. Interacts with RNase III.

The enzyme catalyses 3''-O-acetyl-ADP-D-ribose + H2O = ADP-D-ribose + acetate + H(+). The catalysed reaction is 2''-O-acetyl-ADP-D-ribose + H2O = ADP-D-ribose + acetate + H(+). Functionally, deacetylates O-acetyl-ADP ribose to yield ADP-ribose and free acetate. Down-regulates ribonuclease 3 (RNase III) activity. Acts by interacting directly with the region of the ribonuclease that is required for dimerization/activation. This Pantoea vagans (strain C9-1) (Pantoea agglomerans (strain C9-1)) protein is O-acetyl-ADP-ribose deacetylase 2.